Here is a 634-residue protein sequence, read N- to C-terminus: CRISPR-associated protein MJ1674 (634 aa).

Its function is as follows. CRISPR (clustered regularly interspaced short palindromic repeat) is an adaptive immune system that provides protection against mobile genetic elements (viruses, transposable elements and conjugative plasmids). CRISPR clusters contain spacers, sequences complementary to antecedent mobile elements, and target invading nucleic acids. CRISPR clusters are transcribed and processed into CRISPR RNA (crRNA). The type III Csm effector complex binds crRNA and acts as a crRNA-guided RNase, DNase and cyclic oligoadenylate synthase; binding of target RNA cognate to the crRNA is required for all activities. This Methanocaldococcus jannaschii (strain ATCC 43067 / DSM 2661 / JAL-1 / JCM 10045 / NBRC 100440) (Methanococcus jannaschii) protein is CRISPR-associated protein MJ1674.